A 360-amino-acid chain; its full sequence is Secreted LysM effector LysM2 (360 aa).

Positions 1 to 21 (MKISSLSILPLLGVVSAGIHG) are cleaved as a signal peptide. The LysM 1 domain occupies 37-85 (TWYLDLVDDSYTCENIESQWDLSHEAFVAWNPGVKKDCSGLKVGLSVCV). A compositionally biased stretch (low complexity) spans 94–113 (ATPTSEASTSSETSSASPTA). The disordered stretch occupies residues 94–125 (ATPTSEASTSSETSSASPTASRPPLPSPTQDG). N129 is a glycosylation site (N-linked (GlcNAc...) asparagine). The 48-residue stretch at 132–179 (KFHQAVSGDTCSKIISRYKPITLDQFIEWNPALEKDCSGLWSGYYYCV) folds into the LysM 2 domain. N204 is a glycosylation site (N-linked (GlcNAc...) asparagine). LysM domains lie at 225–272 (RWHK…YYCI) and 311–357 (KWHQ…YVCV).

It belongs to the secreted LysM effector family.

Its subcellular location is the secreted. The protein localises to the cell wall. Secreted effector that binds two substrates, chitin and N-linked oligosaccharides associated with human skin glycoproteins. Could provide the pathogen with three important functions including shielding host cell wall chitin from the human immune system, shielding the pathogen's glycoproteins from host degradation and immune surveillance, and helping facilitate pathogen adhesion to human skin. The polypeptide is Secreted LysM effector LysM2 (Trichophyton rubrum (strain ATCC MYA-4607 / CBS 118892) (Athlete's foot fungus)).